Consider the following 577-residue polypeptide: Adenine deaminase (577 aa).

The protein belongs to the metallo-dependent hydrolases superfamily. Adenine deaminase family. It depends on Mn(2+) as a cofactor.

It carries out the reaction adenine + H2O + H(+) = hypoxanthine + NH4(+). The polypeptide is Adenine deaminase (Kosmotoga olearia (strain ATCC BAA-1733 / DSM 21960 / TBF 19.5.1)).